We begin with the raw amino-acid sequence, 414 residues long: Esterase FrsA (414 aa).

The protein belongs to the FrsA family.

It catalyses the reaction a carboxylic ester + H2O = an alcohol + a carboxylate + H(+). Functionally, catalyzes the hydrolysis of esters. The sequence is that of Esterase FrsA from Salmonella dublin (strain CT_02021853).